A 299-amino-acid polypeptide reads, in one-letter code: MGAQLRVYTQKIKSAQTTKKITRAMELISASRIQKAQQRMAASAPYSRAVTRAVSAVATFSNVDHILTTEPEKVERAAIVIFASDRGLAGAFSSSVLKESEQLAELLRSQGKEIVYYLVGRKAVGYFKFRKRDSERIWTGSTEKPEFETAKSIGDALVEKFVTPASEGGVDEIHIVFNRFVSIATQKPEVVRLLPLEVVEGVEAPVEGAVLPLYEFEPEVGDVLDALLPVYIESRIFNAMLQSAASEHAARQKAMKSASDNADKLVTTYTRLRNNARQTEITQQISEIVGGADALASSK.

It belongs to the ATPase gamma chain family. F-type ATPases have 2 components, CF(1) - the catalytic core - and CF(0) - the membrane proton channel. CF(1) has five subunits: alpha(3), beta(3), gamma(1), delta(1), epsilon(1). CF(0) has three main subunits: a, b and c.

The protein localises to the cell membrane. Functionally, produces ATP from ADP in the presence of a proton gradient across the membrane. The gamma chain is believed to be important in regulating ATPase activity and the flow of protons through the CF(0) complex. The protein is ATP synthase gamma chain of Clavibacter sepedonicus (Clavibacter michiganensis subsp. sepedonicus).